Here is a 605-residue protein sequence, read N- to C-terminus: F-box/WD repeat-containing protein 1A (605 aa).

Residues 128–177 (ASYEKEKELCVKYFEQWSESDQVEFVEHLISQMCHYQHGHINSYLKPMLQ) form a homodimerization domain D region. Residues 190-228 (DHIAENILSYLDAKSLCAAELVCKEWYRVTSDGMLWKKL) form the F-box domain. A required for down-regulation of SNAI1 region spans residues 190–228 (DHIAENILSYLDAKSLCAAELVCKEWYRVTSDGMLWKKL). 7 WD repeats span residues 301 to 338 (ETSK…CKRI), 341 to 378 (GHTG…MLNT), 381 to 418 (HHCE…DITL), 424 to 461 (GHRA…FVRT), 464 to 503 (GHKR…RVLE), 505 to 541 (HEEL…DPRA), and 553 to 590 (EHSG…AAQA).

Homodimer. Self-associates. Component of the SCF(BTRC) complex formed of CUL1, SKP1, RBX1 and a BTRC dimer. Direct interaction with SKP1 occurs via the F-box domain. Interacts with phosphorylated ubiquitination substrates SMAD3 and SMAD4. Interacts with phosphorylated ubiquitination substrates CTNNB1, NFKBIA, NFKBIB, NFKBIE, NFKB1/nuclear factor NF-kappa-B p105 subunit, ATF4, CDC25A, DLG1, FBXO5 and SNAI1; the interaction requires the phosphorylation of the 2 serine residues in the substrate destruction motif D-S-G-X(2,3,4)-S. Binds UBQLN1. Interacts with CDC34 and UBE2R2. Interacts with FBXW11. Interacts with CUL4A and DDB1. Part of a SCF(BTRC)-like complex lacking CUL1, which is associated with phosphorylated NKBIA and RELA; RELA interacts directly with NFKBIA. Interacts with the phosphorylated form of GLI3. Interacts with CLU. Interacts with PER1 (phosphorylated), PER2 (phosphorylated) and PER3. Interacts with phosphorylated ubiquitination substrate CEP68. Interacts with ZC3H12A; this interaction occurs when ZC3H12A is phosphorylated in a IKBKB/IKKB-dependent manner. Interacts with HSF1; this interaction occurs during mitosis and induces HSF1 ubiquitin-dependent degradation, a process inhibited by CDC20. Interacts with NFE2L1. Interacts with INAVA. Interacts with IL10RA; this interaction leads to IL10RA ubiquitination and subsequent degradation. Interacts with REST. Interacts with KLF4; this interaction leads to KLF4 ubiquitination and subsequent degradation. Interacts with UBR2, as part of a SCF(BTRC) complex; the interaction mediates 'Lys-48'-linked ubiquitination of UBR2 and is regulated by DUSP22 in the T-cell receptor signaling pathway. As to quaternary structure, (Microbial infection) Interacts with vaccinia virus A49; this interaction inhibits NF-kappa-B activation. In terms of assembly, (Microbial infection) Interacts with HIV-1 Vpu. Post-translationally, ubiquitinated. Deubiquitinated by OTUD5, promoting its stability. As to expression, expressed in epididymis (at protein level).

It localises to the cytoplasm. The protein resides in the nucleus. It functions in the pathway protein modification; protein ubiquitination. Its function is as follows. Substrate recognition component of a SCF (SKP1-CUL1-F-box protein) E3 ubiquitin-protein ligase complex which mediates the ubiquitination and subsequent proteasomal degradation of target proteins. Recognizes and binds to phosphorylated target proteins. SCF(BTRC) mediates the ubiquitination of CTNNB1 and participates in Wnt signaling. SCF(BTRC) mediates the ubiquitination of phosphorylated NFKB1, ATF4, CDC25A, DLG1, FBXO5, PER1, SMAD3, SMAD4, SNAI1 and probably NFKB2. SCF(BTRC) mediates the ubiquitination of NFKBIA, NFKBIB and NFKBIE; the degradation frees the associated NFKB1 to translocate into the nucleus and to activate transcription. Ubiquitination of NFKBIA occurs at 'Lys-21' and 'Lys-22'. The SCF(FBXW11) complex also regulates NF-kappa-B by mediating ubiquitination of phosphorylated NFKB1: specifically ubiquitinates the p105 form of NFKB1, leading to its degradation. SCF(BTRC) mediates the ubiquitination of CEP68; this is required for centriole separation during mitosis. SCF(BTRC) mediates the ubiquitination and subsequent degradation of nuclear NFE2L1. Has an essential role in the control of the clock-dependent transcription via degradation of phosphorylated PER1 and PER2. May be involved in ubiquitination and subsequent proteasomal degradation through a DBB1-CUL4 E3 ubiquitin-protein ligase. Required for activation of NFKB-mediated transcription by IL1B, MAP3K14, MAP3K1, IKBKB and TNF. Required for proteolytic processing of GLI3. Mediates ubiquitination of REST, thereby leading to its proteasomal degradation. SCF(BTRC) mediates the ubiquitination and subsequent proteasomal degradation of KLF4; thereby negatively regulating cell pluripotency maintenance and embryogenesis. SCF(BTRC) acts as a regulator of mTORC1 signaling pathway by catalyzing ubiquitination and subsequent proteasomal degradation of phosphorylated DEPTOR, TFE3 and MITF. SCF(BTRC) directs 'Lys-48'-linked ubiquitination of UBR2 in the T-cell receptor signaling pathway. This chain is F-box/WD repeat-containing protein 1A (BTRC), found in Homo sapiens (Human).